The chain runs to 1113 residues: Period circadian protein homolog 3 (1113 aa).

Residues 1 to 48 (MDPCGDPAVPGGDCPQTRGPGLQGASGQEGPLQGTCVDSSHSEHEDRN) are disordered. The short motif at 54–63 (LIMVVQEMKK) is the Nuclear export signal 1 element. 2 PAS domains span residues 120–187 (LASE…PTQL) and 258–324 (YEAP…KVLK). The PAC domain occupies 333-376 (HSPVRFCTQNGEYVILDSSWSSFVNPWSRKVSFIIGRHKVRTSP). The Nuclear export signal 3 motif lies at 399-408 (LQEQIHKLLL). Over residues 418-427 (GYGSLGSSGS) the composition is skewed to low complexity. Disordered stretches follow at residues 418-451 (GYGS…GQHE), 485-530 (VAET…SSSY), 561-580 (TSSS…SQRD), 718-742 (HSRC…DTSS), and 871-906 (LVPA…PFIS). Polar residues-rich tracts occupy residues 428–441 (QEQH…SESS) and 501–530 (FSSS…SSSY). Residues 551-750 (LKRKCISCTN…SSPGAHLCPH (200 aa)) form a CSNK1E binding domain region. Basic and acidic residues predominate over residues 566-580 (EEAKPIPEVDSSQRD). Positions 719-735 (SRCAGSERQKHKRKKLP) match the Nuclear localization signal motif. Positions 889 to 901 (RRVEENWEAHSEE) are enriched in basic and acidic residues. A Phosphoserine modification is found at S907. A Nuclear export signal 2 motif is present at residues 913–920 (LQLNLLQE). The segment at 921-1010 (EMPAPSESAD…DRQRDEALPG (90 aa)) is disordered. Positions 962 to 986 (ATATAQQESAAASGSSASSIYFSST) are enriched in low complexity. Residues 993 to 1007 (SENRQRPQDRQRDEA) are compositionally biased toward basic and acidic residues. Positions 1035-1113 (ERGREEVLKQ…LEQHPAEDTS (79 aa)) are CRY binding domain.

As to quaternary structure, homodimer. Component of the circadian core oscillator, which includes the CRY proteins, CLOCK or NPAS2, BMAL1 or BMAL2, CSNK1D and/or CSNK1E, TIMELESS and the PER proteins. Interacts directly with PER1, PER2, CRY1, CRY2, and TIMELESS; interaction with CRY1 and CRY2 is weak and not rhythmic. Interacts with FBXW11 and BTRC. Phosphorylation by CSNK1E is weak and appears to require association with PER1 and translocation to the nucleus. Post-translationally, ubiquitinated. Widely expressed. Expressed in heart, brain, lung, liver, skeletal muscle, testis, and at low level in the spleen and kidney. In brain, mainly found in the SCN, hippocampus, piriform cortex, and cerebellum. Lower level of expression in the neocortex. Expression exhibits synchronous oscillations in liver, skeletal muscle and testis.

It is found in the cytoplasm. The protein resides in the nucleus. Functionally, originally described as a core component of the circadian clock. The circadian clock, an internal time-keeping system, regulates various physiological processes through the generation of approximately 24 hour circadian rhythms in gene expression, which are translated into rhythms in metabolism and behavior. It is derived from the Latin roots 'circa' (about) and 'diem' (day) and acts as an important regulator of a wide array of physiological functions including metabolism, sleep, body temperature, blood pressure, endocrine, immune, cardiovascular, and renal function. Consists of two major components: the central clock, residing in the suprachiasmatic nucleus (SCN) of the brain, and the peripheral clocks that are present in nearly every tissue and organ system. Both the central and peripheral clocks can be reset by environmental cues, also known as Zeitgebers (German for 'timegivers'). The predominant Zeitgeber for the central clock is light, which is sensed by retina and signals directly to the SCN. The central clock entrains the peripheral clocks through neuronal and hormonal signals, body temperature and feeding-related cues, aligning all clocks with the external light/dark cycle. Circadian rhythms allow an organism to achieve temporal homeostasis with its environment at the molecular level by regulating gene expression to create a peak of protein expression once every 24 hours to control when a particular physiological process is most active with respect to the solar day. Transcription and translation of core clock components (CLOCK, NPAS2, BMAL1, BMAL2, PER1, PER2, PER3, CRY1 and CRY2) plays a critical role in rhythm generation, whereas delays imposed by post-translational modifications (PTMs) are important for determining the period (tau) of the rhythms (tau refers to the period of a rhythm and is the length, in time, of one complete cycle). A diurnal rhythm is synchronized with the day/night cycle, while the ultradian and infradian rhythms have a period shorter and longer than 24 hours, respectively. Disruptions in the circadian rhythms contribute to the pathology of cardiovascular diseases, cancer, metabolic syndromes and aging. A transcription/translation feedback loop (TTFL) forms the core of the molecular circadian clock mechanism. Transcription factors, CLOCK or NPAS2 and BMAL1 or BMAL2, form the positive limb of the feedback loop, act in the form of a heterodimer and activate the transcription of core clock genes and clock-controlled genes (involved in key metabolic processes), harboring E-box elements (5'-CACGTG-3') within their promoters. The core clock genes: PER1/2/3 and CRY1/2 which are transcriptional repressors form the negative limb of the feedback loop and interact with the CLOCK|NPAS2-BMAL1|BMAL2 heterodimer inhibiting its activity and thereby negatively regulating their own expression. This heterodimer also activates nuclear receptors NR1D1, NR1D2, RORA, RORB and RORG, which form a second feedback loop and which activate and repress BMAL1 transcription, respectively. Has a redundant role with the other PER proteins PER1 and PER2 and is not essential for the circadian rhythms maintenance. In contrast, plays an important role in sleep-wake timing and sleep homeostasis probably through the transcriptional regulation of sleep homeostasis-related genes, without influencing circadian parameters. Can bind heme. This chain is Period circadian protein homolog 3 (Per3), found in Mus musculus (Mouse).